A 409-amino-acid polypeptide reads, in one-letter code: MSPSKTTPPSPTALVYGATGVTGWGLCKNLLEQQADSASTPTFSRVIGVCKQPAQDLGLFLEDKRFELVDGVDLLQGEDSVVEVLKEVKGIENVTHVFYVANRNSPSDGPDERISFNVKMIQSAVKAAEQLSSNMQVLIMQTSINVYGIFASLMGGTLTCPSPLVESADRTPSPYREMDVHYAQCDELKRLSKGKSWSWFEVRPDAVIGYVPRRHENNFTVSLGLFLATYAHVHGAGAPVRFPGTPESWKCKFSMVSQDQLARFEIHLATHAEGLQSGEAFNVSNGDVLTWSKLWPEAAARFGLRGVGPEGAGEEEGKGEAEGGAKGATGWSWPLGDETTMKKWEEENQVQKGWGGNLSEVCFVNTMRPTVDRILSLDKAKKIGFEARDDTIAAFDKAWALFKKARILP.

The NADP(+) site is built by Val-49, Leu-68, Lys-195, Val-288, Thr-290, and Ala-299. The tract at residues 306-332 (GVGPEGAGEEEGKGEAEGGAKGATGWS) is disordered.

This sequence belongs to the short-chain dehydrogenases/reductases (SDR) family. Highly divergent.

It functions in the pathway mycotoxin biosynthesis. Its function is as follows. Short chain dehydrogenase; part of the gene cluster that mediates the biosynthesis of sirodesmin PL, an epipolythiodioxopiperazine (ETP) characterized by a disulfide bridged cyclic dipeptide and that acts as a phytotoxin which is involved in the blackleg didease of canola. SirD catalyzes the O-prenylation of L-tyrosine (L-Tyr) in the presence of dimethylallyl diphosphate (DMAPP) to yield 4-O-dimethylallyl-L-Tyr, and therefore represents probably the first pathway-specific enzyme in the biosynthesis of sirodesmin PL. 4-O-dimethylallyl-L-Tyr, then undergoes condensation with L-Ser in a reaction catalyzed by the non-ribosomal peptide synthase sirP to form the diketopiperazine (DKP) backbone. Further bishydroxylation of the DKP performed by the cytochrome P450 monooxygenase sirC leads to the production of the intermediate phomamide. This step is essential to form the reactive thiol group required for toxicity of sirodesmin PL. The next steps of sirodesmin biosynthesis are not well understood yet, but some predictions could be made from intermediate compounds identification. Phomamide is converted into phomalizarine via oxidation, probably by sirT. Further oxidation, methylation (by sirM or sirN) and reduction steps convert phomalizarine to deacetyl sirodesmin. Finally, acetyltransferase sirH probably acetylates deacetyl sirodesmin to produce sirodesmin PL. In Leptosphaeria maculans (Blackleg fungus), this protein is Short chain dehydrogenase sirS.